The sequence spans 571 residues: Urease subunit alpha (571 aa).

The 439-residue stretch at Gly-133 to Phe-571 folds into the Urease domain. Ni(2+) is bound by residues His-138, His-140, and Lys-221. Lys-221 bears the N6-carboxylysine mark. A substrate-binding site is contributed by His-223. Positions 250 and 276 each coordinate Ni(2+). The active-site Proton donor is the His-324. Asp-364 provides a ligand contact to Ni(2+).

Belongs to the metallo-dependent hydrolases superfamily. Urease alpha subunit family. Heterotrimer of UreA (gamma), UreB (beta) and UreC (alpha) subunits. Three heterotrimers associate to form the active enzyme. Ni cation serves as cofactor. Post-translationally, carboxylation allows a single lysine to coordinate two nickel ions.

Its subcellular location is the cytoplasm. The catalysed reaction is urea + 2 H2O + H(+) = hydrogencarbonate + 2 NH4(+). It participates in nitrogen metabolism; urea degradation; CO(2) and NH(3) from urea (urease route): step 1/1. This Staphylococcus carnosus (strain TM300) protein is Urease subunit alpha.